A 523-amino-acid chain; its full sequence is MPEMGVFLLATQAMAAPGELLNLALNAGAIAPEGAVLVAMLATLLVDLAGEQAAARWVPPICYAGLGTALVLLAQQWNAPLEPSFLGAFLADNLAIAFRAVVALSTLLSLLISWRYAEQSGTPIGEYAAILLAATLGAMLLCGSTDLVSVFVSLETLSVASYLLAGYMKRDARSSEAALKYLLVGSAAAAVFLYGASLLYGLSGTTSLQAIGIALLTSPTPLAALSLVFVLATVAFKIAAVPFHQWTPDVYEGSPTPVVAFLSVGSKAAGFALALRLLVGCFGAFDNQWKLLFTVLAVLSMTLGNVVALAQTSMKRMLAYSSIGQAGFVMIGLVCGTEDGFAAMVLYMAAYLFMNLGAFACIILFSIRTGSDRISDYAGLYQKDPLITLGLSLCLLSLGGIPPMLGFFGKIYLFFAGWADHQYLLVVVGLVTSVVSIYYYISVIKMMVVKEPKEASDVVKSYPSIQWSTIGMPPLRIALVGCVVVTAVGGILSNPLFQWANNAVAGTPLLQEAIALGSQRSIG.

Transmembrane regions (helical) follow at residues alanine 29–alanine 49, tryptophan 57–tryptophan 77, leucine 94–tryptophan 114, proline 123–glycine 143, leucine 147–tyrosine 167, leucine 182–leucine 202, proline 221–phenylalanine 243, proline 255–leucine 275, leucine 291–glutamine 311, methionine 317–threonine 337, valine 345–phenylalanine 365, leucine 389–glycine 409, leucine 424–isoleucine 444, and isoleucine 477–phenylalanine 497.

This sequence belongs to the complex I subunit 2 family. NDH-1 can be composed of about 15 different subunits; different subcomplexes with different compositions have been identified which probably have different functions.

The protein resides in the cellular thylakoid membrane. The catalysed reaction is a plastoquinone + NADH + (n+1) H(+)(in) = a plastoquinol + NAD(+) + n H(+)(out). It catalyses the reaction a plastoquinone + NADPH + (n+1) H(+)(in) = a plastoquinol + NADP(+) + n H(+)(out). Functionally, NDH-1 shuttles electrons from an unknown electron donor, via FMN and iron-sulfur (Fe-S) centers, to quinones in the respiratory and/or the photosynthetic chain. The immediate electron acceptor for the enzyme in this species is believed to be plastoquinone. Couples the redox reaction to proton translocation, and thus conserves the redox energy in a proton gradient. Cyanobacterial NDH-1 also plays a role in inorganic carbon-concentration. The chain is NAD(P)H-quinone oxidoreductase subunit 2 from Prochlorococcus marinus (strain MIT 9303).